Consider the following 67-residue polypeptide: Large ribosomal subunit protein bL28 (67 aa).

Belongs to the bacterial ribosomal protein bL28 family.

This chain is Large ribosomal subunit protein bL28, found in Nitratiruptor sp. (strain SB155-2).